Reading from the N-terminus, the 207-residue chain is dTTP/UTP pyrophosphatase (207 aa).

The active-site Proton acceptor is Asp-79.

The protein belongs to the Maf family. YhdE subfamily. It depends on a divalent metal cation as a cofactor.

It localises to the cytoplasm. It catalyses the reaction dTTP + H2O = dTMP + diphosphate + H(+). It carries out the reaction UTP + H2O = UMP + diphosphate + H(+). Its function is as follows. Nucleoside triphosphate pyrophosphatase that hydrolyzes dTTP and UTP. May have a dual role in cell division arrest and in preventing the incorporation of modified nucleotides into cellular nucleic acids. In Rhodopseudomonas palustris (strain BisB5), this protein is dTTP/UTP pyrophosphatase.